The following is a 264-amino-acid chain: Thymidylate synthase (264 aa).

Arg21 serves as a coordination point for dUMP. His51 is a binding site for (6R)-5,10-methylene-5,6,7,8-tetrahydrofolate. 126–127 serves as a coordination point for dUMP; it reads RR. Cys146 acts as the Nucleophile in catalysis. DUMP contacts are provided by residues 166-169, Asn177, and 207-209; these read RSAD and HLY. Residue Asp169 coordinates (6R)-5,10-methylene-5,6,7,8-tetrahydrofolate. Ala263 is a binding site for (6R)-5,10-methylene-5,6,7,8-tetrahydrofolate.

The protein belongs to the thymidylate synthase family. Bacterial-type ThyA subfamily. In terms of assembly, homodimer.

Its subcellular location is the cytoplasm. The enzyme catalyses dUMP + (6R)-5,10-methylene-5,6,7,8-tetrahydrofolate = 7,8-dihydrofolate + dTMP. It participates in pyrimidine metabolism; dTTP biosynthesis. Functionally, catalyzes the reductive methylation of 2'-deoxyuridine-5'-monophosphate (dUMP) to 2'-deoxythymidine-5'-monophosphate (dTMP) while utilizing 5,10-methylenetetrahydrofolate (mTHF) as the methyl donor and reductant in the reaction, yielding dihydrofolate (DHF) as a by-product. This enzymatic reaction provides an intracellular de novo source of dTMP, an essential precursor for DNA biosynthesis. The chain is Thymidylate synthase from Cytophaga hutchinsonii (strain ATCC 33406 / DSM 1761 / CIP 103989 / NBRC 15051 / NCIMB 9469 / D465).